Reading from the N-terminus, the 65-residue chain is UPF0434 protein CPS_2127 (65 aa).

Belongs to the UPF0434 family.

The chain is UPF0434 protein CPS_2127 from Colwellia psychrerythraea (strain 34H / ATCC BAA-681) (Vibrio psychroerythus).